The chain runs to 223 residues: MKRTKSIRHASFRKNWSARHLTPVALAVATVFMLASCEKSDETVSLYQNADDCSAANPGKSAECTTAYNNALKEAERTAPKYATREDCVAEFGEGQCQQAPAQAGMAPENQAQAQQSSGSFWMPLMAGYMMGRLMGGGAGFAQQPLFSSKNPASPAYGKYTDATGKNYGAAQPGRTMTVPKTAMAPKPATTTTVTRGGFGESVAKQSTMQRSATGTSSRSMGG.

The segment covering 178–195 has biased composition (low complexity); the sequence is TVPKTAMAPKPATTTTVT. A disordered region spans residues 178–223; the sequence is TVPKTAMAPKPATTTTVTRGGFGESVAKQSTMQRSATGTSSRSMGG. The span at 204–223 shows a compositional bias: polar residues; the sequence is AKQSTMQRSATGTSSRSMGG.

The protein belongs to the UPF0441 family.

The sequence is that of UPF0441 protein YgiB from Shigella boydii serotype 18 (strain CDC 3083-94 / BS512).